A 131-amino-acid polypeptide reads, in one-letter code: Small ribosomal subunit protein bS6 (131 aa).

The segment at 96–131 (VTEASPMAKAKDERDSRRGPAGDRSYDEANAEEIAE) is disordered. The span at 104–122 (KAKDERDSRRGPAGDRSYD) shows a compositional bias: basic and acidic residues.

This sequence belongs to the bacterial ribosomal protein bS6 family.

Its function is as follows. Binds together with bS18 to 16S ribosomal RNA. This chain is Small ribosomal subunit protein bS6, found in Shewanella sp. (strain ANA-3).